The sequence spans 361 residues: Solute carrier family 25 member 3 (361 aa).

The transit peptide at 1–49 (MFSSVAHLARANPFNTPHLQLVHDGLGDFRSRPPGPTGQPRRPRNLAAA) directs the protein to the mitochondrion. The disordered stretch occupies residues 25 to 44 (GLGDFRSRPPGPTGQPRRPR). Over 50–62 (AVEEYSCEFGSAK) the chain is Mitochondrial intermembrane. Solcar repeat units follow at residues 62 to 146 (KYYA…FKVL), 159 to 243 (WRTS…TVEA), and 260 to 338 (EQLV…VKVY). A helical membrane pass occupies residues 63-85 (YYALCGFGGVLSCGLTHTAVVPL). At 86–120 (DLVKCRMQVDPQKYKGIFNGFSVTLKEDGVRGLAK) the chain is on the mitochondrial matrix side. At Lys-98 the chain carries N6-acetyllysine. The residue at position 111 (Lys-111) is an N6-methyllysine. A helical transmembrane segment spans residues 121–140 (GWAPTFLGYSMQGLCKFGFY). Residues 141-160 (EVFKVLYSNMLGEENTYLWR) lie on the Mitochondrial intermembrane side of the membrane. The chain crosses the membrane as a helical span at residues 161 to 182 (TSLYLAASASAEFFADIALAPM). Topologically, residues 183-217 (EAAKVRIQTQPGYANTLRDAAPKMYKEEGLKAFYK) are mitochondrial matrix. Tyr-195 is modified (phosphotyrosine). An N6-acetyllysine modification is found at Lys-208. A helical membrane pass occupies residues 218 to 237 (GVAPLWMRQIPYTMMKFACF). Over 238–260 (ERTVEALYKFVVPKPRSECSKPE) the chain is Mitochondrial intermembrane. A helical membrane pass occupies residues 261 to 283 (QLVVTFVAGYIAGVFCAIVSHPA). At 284 to 313 (DSVVSVLNKEKGSSASLVLKRLGFKGVWKG) the chain is on the mitochondrial matrix side. A helical transmembrane segment spans residues 314–332 (LFARIIMIGTLTALQWFIY). Topologically, residues 333–361 (DSVKVYFRLPRPPPPEMPESLKKKLGLTQ) are mitochondrial intermembrane.

This sequence belongs to the mitochondrial carrier (TC 2.A.29) family. In terms of assembly, interacts with PPIF; the interaction is impaired by CsA.

The protein localises to the mitochondrion inner membrane. It carries out the reaction phosphate(in) + H(+)(in) = phosphate(out) + H(+)(out). In terms of biological role, inorganic ion transporter that transports phosphate or copper ions across the mitochondrial inner membrane into the matrix compartment. Mediates proton-coupled symport of phosphate ions necessary for mitochondrial oxidative phosphorylation of ADP to ATP. Transports copper ions probably in the form of anionic copper(I) complexes to maintain mitochondrial matrix copper pool and to supply copper for cytochrome C oxidase complex assembly. May also play a role in regulation of the mitochondrial permeability transition pore (mPTP). The protein is Solute carrier family 25 member 3 of Pongo abelii (Sumatran orangutan).